A 289-amino-acid polypeptide reads, in one-letter code: Bis(5'-nucleosyl)-tetraphosphatase, symmetrical (289 aa).

This sequence belongs to the Ap4A hydrolase family.

The enzyme catalyses P(1),P(4)-bis(5'-adenosyl) tetraphosphate + H2O = 2 ADP + 2 H(+). Functionally, hydrolyzes diadenosine 5',5'''-P1,P4-tetraphosphate to yield ADP. The polypeptide is Bis(5'-nucleosyl)-tetraphosphatase, symmetrical (Yersinia pestis bv. Antiqua (strain Antiqua)).